A 77-amino-acid polypeptide reads, in one-letter code: Acyl carrier protein (77 aa).

One can recognise a Carrier domain in the interval 1 to 76 (MAIFDDVKKV…DVVNYIENLQ (76 aa)). Ser36 is subject to O-(pantetheine 4'-phosphoryl)serine.

This sequence belongs to the acyl carrier protein (ACP) family. In terms of processing, 4'-phosphopantetheine is transferred from CoA to a specific serine of apo-ACP by AcpS. This modification is essential for activity because fatty acids are bound in thioester linkage to the sulfhydryl of the prosthetic group.

The protein resides in the cytoplasm. It functions in the pathway lipid metabolism; fatty acid biosynthesis. Its function is as follows. Carrier of the growing fatty acid chain in fatty acid biosynthesis. This chain is Acyl carrier protein, found in Campylobacter lari (strain RM2100 / D67 / ATCC BAA-1060).